A 195-amino-acid chain; its full sequence is Protein GrpE (195 aa).

A compositionally biased stretch (basic and acidic residues) spans 1–18; that stretch reads MDPKEKKTKQEEELKVDD. Residues 1 to 41 form a disordered region; sequence MDPKEKKTKQEEELKVDDIQDTVEGQSQNEEATEATEPLTA.

This sequence belongs to the GrpE family. As to quaternary structure, homodimer.

Its subcellular location is the cytoplasm. In terms of biological role, participates actively in the response to hyperosmotic and heat shock by preventing the aggregation of stress-denatured proteins, in association with DnaK and GrpE. It is the nucleotide exchange factor for DnaK and may function as a thermosensor. Unfolded proteins bind initially to DnaJ; upon interaction with the DnaJ-bound protein, DnaK hydrolyzes its bound ATP, resulting in the formation of a stable complex. GrpE releases ADP from DnaK; ATP binding to DnaK triggers the release of the substrate protein, thus completing the reaction cycle. Several rounds of ATP-dependent interactions between DnaJ, DnaK and GrpE are required for fully efficient folding. The polypeptide is Protein GrpE (Bacteroides fragilis (strain ATCC 25285 / DSM 2151 / CCUG 4856 / JCM 11019 / LMG 10263 / NCTC 9343 / Onslow / VPI 2553 / EN-2)).